The sequence spans 455 residues: Ribosomal protein uS12 methylthiotransferase RimO (455 aa).

Residues 30–140 enclose the MTTase N-terminal domain; it reads PTIGMVSLGC…VLDAVHGAVP (111 aa). [4Fe-4S] cluster-binding residues include Cys39, Cys75, Cys104, Cys171, Cys175, and Cys178. One can recognise a Radical SAM core domain in the interval 157–386; sequence LTPRHFSYLK…MEKAQAISEA (230 aa). Residues 389–455 enclose the TRAM domain; the sequence is AAKVGRRIEV…GEYDLWGRPV (67 aa).

The protein belongs to the methylthiotransferase family. RimO subfamily. It depends on [4Fe-4S] cluster as a cofactor.

It localises to the cytoplasm. The enzyme catalyses L-aspartate(89)-[ribosomal protein uS12]-hydrogen + (sulfur carrier)-SH + AH2 + 2 S-adenosyl-L-methionine = 3-methylsulfanyl-L-aspartate(89)-[ribosomal protein uS12]-hydrogen + (sulfur carrier)-H + 5'-deoxyadenosine + L-methionine + A + S-adenosyl-L-homocysteine + 2 H(+). Its function is as follows. Catalyzes the methylthiolation of an aspartic acid residue of ribosomal protein uS12. This is Ribosomal protein uS12 methylthiotransferase RimO from Cereibacter sphaeroides (strain ATCC 17029 / ATH 2.4.9) (Rhodobacter sphaeroides).